The sequence spans 415 residues: Gamma-glutamyl phosphate reductase (415 aa).

Belongs to the gamma-glutamyl phosphate reductase family.

The protein localises to the cytoplasm. It catalyses the reaction L-glutamate 5-semialdehyde + phosphate + NADP(+) = L-glutamyl 5-phosphate + NADPH + H(+). The protein operates within amino-acid biosynthesis; L-proline biosynthesis; L-glutamate 5-semialdehyde from L-glutamate: step 2/2. In terms of biological role, catalyzes the NADPH-dependent reduction of L-glutamate 5-phosphate into L-glutamate 5-semialdehyde and phosphate. The product spontaneously undergoes cyclization to form 1-pyrroline-5-carboxylate. This is Gamma-glutamyl phosphate reductase from Listeria monocytogenes serovar 1/2a (strain ATCC BAA-679 / EGD-e).